A 294-amino-acid polypeptide reads, in one-letter code: MEFRQLKYFIAVAEAGNMAAAAKRLHVSQPPITRQMQALEADLGVVLLERSHRGIELTAAGHAFLEDARRILELAGRSGDRSRAAARGDVGELSVAYFGTPIYRSLPLLLRAFLTSTPTATVSLTHMTKDEQVEGLLAGTIHVGFSRFFPRHPGIEIVNIAQEDLYLAVHRSQSGKFGKTCKLADLRAVELTLFPRGGRPSFADEVIGLFKHAGIEPRIARVVEDATAALALTMAGAASSIVPASVAAIRWPDIAFARIVGTRVKVPISCTFRKEKQPPILARFVEHVRRSAKD.

The HTH lysR-type domain occupies 1–58 (MEFRQLKYFIAVAEAGNMAAAAKRLHVSQPPITRQMQALEADLGVVLLERSHRGIELT). The segment at residues 18–37 (MAAAAKRLHVSQPPITRQMQ) is a DNA-binding region (H-T-H motif).

This sequence belongs to the LysR transcriptional regulatory family.

Its function is as follows. Involved in regulation of chlorinated catechol metabolism. Transcriptional activator of the tcbCDEF chlorocatechol oxidative operon. May bind 2-chloromuconate as an inducer. This is HTH-type transcriptional regulator TcbR (tcbR) from Pseudomonas sp. (strain P51).